A 153-amino-acid chain; its full sequence is Small ribosomal subunit protein uS12m (153 aa).

A mitochondrion-targeting transit peptide spans Met-1–Leu-20.

The protein belongs to the universal ribosomal protein uS12 family. In terms of assembly, component of the mitochondrial small ribosomal subunit (mt-SSU). Mature yeast 74S mitochondrial ribosomes consist of a small (37S) and a large (54S) subunit. The 37S small subunit contains a 15S ribosomal RNA (15S mt-rRNA) and 34 different proteins. The 54S large subunit contains a 21S rRNA (21S mt-rRNA) and 46 different proteins. uS12m forms part of the decoding center of the mt-SSU.

It localises to the mitochondrion. Functionally, component of the mitochondrial ribosome (mitoribosome), a dedicated translation machinery responsible for the synthesis of mitochondrial genome-encoded proteins, including at least some of the essential transmembrane subunits of the mitochondrial respiratory chain. The mitoribosomes are attached to the mitochondrial inner membrane and translation products are cotranslationally integrated into the membrane. uS12m is required for respiratory growth. This Saccharomyces cerevisiae (strain ATCC 204508 / S288c) (Baker's yeast) protein is Small ribosomal subunit protein uS12m (MRPS12).